Here is a 379-residue protein sequence, read N- to C-terminus: 8-amino-7-oxononanoate synthase (379 aa).

Positions 27 and 34 each coordinate substrate. Position 114–115 (Gly114–Tyr115) interacts with pyridoxal 5'-phosphate. His139 is a binding site for substrate. Pyridoxal 5'-phosphate contacts are provided by residues Ser187, Asp212–His215, and Thr232–Lys235. An N6-(pyridoxal phosphate)lysine modification is found at Lys235. Thr344 lines the substrate pocket.

It belongs to the class-II pyridoxal-phosphate-dependent aminotransferase family. BioF subfamily. As to quaternary structure, homodimer. Pyridoxal 5'-phosphate is required as a cofactor.

It carries out the reaction 6-carboxyhexanoyl-[ACP] + L-alanine + H(+) = (8S)-8-amino-7-oxononanoate + holo-[ACP] + CO2. It participates in cofactor biosynthesis; biotin biosynthesis. Its function is as follows. Catalyzes the decarboxylative condensation of pimeloyl-[acyl-carrier protein] and L-alanine to produce 8-amino-7-oxononanoate (AON), [acyl-carrier protein], and carbon dioxide. The protein is 8-amino-7-oxononanoate synthase of Methylobacterium sp. (strain 4-46).